A 227-amino-acid chain; its full sequence is Uracil-DNA glycosylase (227 aa).

D64 serves as the catalytic Proton acceptor.

Belongs to the uracil-DNA glycosylase (UDG) superfamily. UNG family.

It localises to the cytoplasm. It carries out the reaction Hydrolyzes single-stranded DNA or mismatched double-stranded DNA and polynucleotides, releasing free uracil.. In terms of biological role, excises uracil residues from the DNA which can arise as a result of misincorporation of dUMP residues by DNA polymerase or due to deamination of cytosine. The sequence is that of Uracil-DNA glycosylase from Sodalis glossinidius (strain morsitans).